A 161-amino-acid chain; its full sequence is Nucleotide-binding protein Rfer_2692 (161 aa).

Belongs to the YajQ family.

Its function is as follows. Nucleotide-binding protein. The sequence is that of Nucleotide-binding protein Rfer_2692 from Albidiferax ferrireducens (strain ATCC BAA-621 / DSM 15236 / T118) (Rhodoferax ferrireducens).